A 432-amino-acid polypeptide reads, in one-letter code: Anaerobic glycerol-3-phosphate dehydrogenase subunit B (432 aa).

The protein belongs to the anaerobic G-3-P dehydrogenase subunit B family. As to quaternary structure, composed of a catalytic GlpA/B dimer and of membrane bound GlpC. The cofactor is FMN.

The catalysed reaction is a quinone + sn-glycerol 3-phosphate = dihydroxyacetone phosphate + a quinol. It participates in polyol metabolism; glycerol degradation via glycerol kinase pathway; glycerone phosphate from sn-glycerol 3-phosphate (anaerobic route): step 1/1. Functionally, conversion of glycerol 3-phosphate to dihydroxyacetone. Uses fumarate or nitrate as electron acceptor. The protein is Anaerobic glycerol-3-phosphate dehydrogenase subunit B of Haemophilus influenzae (strain PittEE).